We begin with the raw amino-acid sequence, 434 residues long: Enolase A (434 aa).

Substrate-binding residues include His160 and Glu169. The active-site Proton donor is the Glu212. Residues Asp247, Glu296, and Asp321 each contribute to the Mg(2+) site. Substrate is bound by residues Glu296 and Asp321. The active-site Proton acceptor is the Lys346. Substrate-binding positions include 373–376 (SHRS) and Lys397.

It belongs to the enolase family. In terms of assembly, homodimer. Mg(2+) serves as cofactor.

Its subcellular location is the cytoplasm. The catalysed reaction is (2R)-2-phosphoglycerate = phosphoenolpyruvate + H2O. Its pathway is carbohydrate degradation; glycolysis; pyruvate from D-glyceraldehyde 3-phosphate: step 4/5. This Dictyostelium discoideum (Social amoeba) protein is Enolase A (enoA).